A 1201-amino-acid chain; its full sequence is ATPase with bromodomain protein abo2 (1201 aa).

Disordered stretches follow at residues 1-223 and 305-324; these read MRRR…MRGP and CDSD…TSDV. Acidic residues predominate over residues 13–24; it reads DDNEDNEEDDDY. The span at 29–38 shows a compositional bias: basic and acidic residues; the sequence is HSEKSEDHSN. Polar residues predominate over residues 66 to 89; it reads FSSLQKHLNTETPSFSVSIENPSK. Acidic residues predominate over residues 129-146; the sequence is TDNNEDESTTFKDEEDDL. Positions 212–221 are enriched in basic residues; that stretch reads RRGRRKRKMR. The segment covering 312–323 has biased composition (low complexity); it reads ELSSTSSEQTSD. 413-420 provides a ligand contact to ATP; it reads GPPGTGKT. A Bromo domain is found at 897 to 1026; it reads KIKNKIQVKL…AHAELNVDEL (130 aa).

The protein belongs to the AAA ATPase family.

The protein resides in the nucleus. The enzyme catalyses ATP + H2O = ADP + phosphate + H(+). Functionally, probable ATPase which may play a role in nucleosome organization. The polypeptide is ATPase with bromodomain protein abo2 (Schizosaccharomyces pombe (strain 972 / ATCC 24843) (Fission yeast)).